Reading from the N-terminus, the 131-residue chain is Small ribosomal subunit protein uS8 (131 aa).

Belongs to the universal ribosomal protein uS8 family. As to quaternary structure, part of the 30S ribosomal subunit. Contacts proteins S5 and S12.

Functionally, one of the primary rRNA binding proteins, it binds directly to 16S rRNA central domain where it helps coordinate assembly of the platform of the 30S subunit. The polypeptide is Small ribosomal subunit protein uS8 (Campylobacter jejuni subsp. jejuni serotype O:23/36 (strain 81-176)).